The sequence spans 233 residues: ATP-dependent Clp protease proteolytic subunit 1 (233 aa).

S116 serves as the catalytic Nucleophile. H141 is an active-site residue.

It belongs to the peptidase S14 family. In terms of assembly, fourteen ClpP subunits assemble into 2 heptameric rings which stack back to back to give a disk-like structure with a central cavity, resembling the structure of eukaryotic proteasomes.

Its subcellular location is the cytoplasm. It carries out the reaction Hydrolysis of proteins to small peptides in the presence of ATP and magnesium. alpha-casein is the usual test substrate. In the absence of ATP, only oligopeptides shorter than five residues are hydrolyzed (such as succinyl-Leu-Tyr-|-NHMec, and Leu-Tyr-Leu-|-Tyr-Trp, in which cleavage of the -Tyr-|-Leu- and -Tyr-|-Trp bonds also occurs).. Cleaves peptides in various proteins in a process that requires ATP hydrolysis. Has a chymotrypsin-like activity. Plays a major role in the degradation of misfolded proteins. This chain is ATP-dependent Clp protease proteolytic subunit 1, found in Salinibacter ruber (strain DSM 13855 / M31).